A 947-amino-acid chain; its full sequence is Microtubule cross-linking factor 3 (947 aa).

An N-terminal signal peptide occupies residues M1–A21. Disordered regions lie at residues M1–K251, K266–N368, and L496–D524. Low complexity-rich tracts occupy residues A9 to E24, Q72 to Q81, and A109 to G137. Basic and acidic residues predominate over residues G141–E151. Positions G164 to S180 are enriched in gly residues. Over residues A214–S236 the composition is skewed to low complexity. The span at G237 to S248 shows a compositional bias: gly residues. Low complexity-rich tracts occupy residues S287–P297 and A304–S325. The stretch at H342–N726 forms a coiled coil. Composition is skewed to basic and acidic residues over residues E355–N368 and L496–A513. S569 is modified (phosphoserine). The interval G743–V786 is disordered. Basic and acidic residues predominate over residues S747–P768. S781 carries the post-translational modification Phosphoserine. Residues D811–D835 are a coiled coil. A helical membrane pass occupies residues P915–F935.

This sequence belongs to the MTCL family.

It is found in the membrane. The polypeptide is Microtubule cross-linking factor 3 (Homo sapiens (Human)).